The sequence spans 197 residues: Adenylylsulfatase HINT3 (197 aa).

The segment at 14 to 43 is disordered; it reads NPPGPNPTRDPTLRVSDCSSGSSGDGKVES. Residues 51-158 enclose the HIT domain; the sequence is VFCKIIRGES…IPRKERDCLW (108 aa). The Histidine triad motif motif lies at 143–147; it reads HTHIH. The active-site Tele-AMP-histidine intermediate is the His145. His147 is a binding site for substrate.

Its subcellular location is the peroxisome. The catalysed reaction is adenosine 5'-phosphosulfate + H2O = sulfate + AMP + 2 H(+). In terms of biological role, possesses adenylylsulfatase activity in vitro. The protein is Adenylylsulfatase HINT3 of Arabidopsis thaliana (Mouse-ear cress).